The chain runs to 390 residues: MKKIALTALAVFSLAASAAYADVVKVGVIGPFSGPFALQGKNFKAGIDAYMAEHGNKVGDDTVEVVYRDVPQADPAQSKALAQELVVKEGVQYLAGFYFTPDAMAVTPILKQGNVPMVVMNAATSSIVTKSPYVVRTSFTTWQTSTPIARVALDKGVKKVISVVSDYGPGVDAENAFKAAFTDAGGEVVEAIRMPLATNDFSPIMQRIKDSGAQGVFAFLPSGPTTFGFMKAYVDNGLKSSGIQLFAPGDLTQESDLPALGENALGVLTTFHYAVSHDSPENRKFVEEARKAIGNPAELSFPSVGAYDGMHVIYKMIEATGGKKDAAKAVEAVKGMEWVSPRGPVSIDPESRHITQNIYLREVAKADDGTYYNKEIQTFEKQGDPGLKAQ.

The first 21 residues, 1–21 (MKKIALTALAVFSLAASAAYA), serve as a signal peptide directing secretion.

It belongs to the leucine-binding protein family.

Functionally, component of an amino-acid transport system. This Brucella abortus (strain 2308) protein is Leu/Ile/Val-binding protein homolog 6.